Consider the following 291-residue polypeptide: 4-hydroxy-tetrahydrodipicolinate synthase (291 aa).

Residue Thr-45 participates in pyruvate binding. Tyr-133 serves as the catalytic Proton donor/acceptor. The active-site Schiff-base intermediate with substrate is Lys-161. Ile-203 is a pyruvate binding site.

Belongs to the DapA family. As to quaternary structure, homotetramer.

It localises to the cytoplasm. It carries out the reaction L-aspartate 4-semialdehyde + pyruvate = (2S,4S)-4-hydroxy-2,3,4,5-tetrahydrodipicolinate + H2O + H(+). Its pathway is amino-acid biosynthesis; L-lysine biosynthesis via DAP pathway; (S)-tetrahydrodipicolinate from L-aspartate: step 3/4. With respect to regulation, is allosterically feedback inhibited by lysine; the N.meningitidis enzyme is significantly more sensitive to lysine than the E.coli enzyme. Shows substrate inhibition by (S)-ASA, with a Ki of 1.7 mM. Its function is as follows. Catalyzes the condensation of (S)-aspartate-beta-semialdehyde [(S)-ASA] and pyruvate to 4-hydroxy-tetrahydrodipicolinate (HTPA). The protein is 4-hydroxy-tetrahydrodipicolinate synthase of Neisseria meningitidis serogroup B (strain ATCC BAA-335 / MC58).